The sequence spans 120 residues: uncharacterized protein (120 aa).

Its subcellular location is the virion. This is an uncharacterized protein from Acanthamoeba polyphaga mimivirus (APMV).